Consider the following 402-residue polypeptide: CCA-adding enzyme (402 aa).

Positions 32 and 35 each coordinate ATP. Positions 32 and 35 each coordinate CTP. Residues Asp45 and Asp47 each contribute to the Mg(2+) site. 5 residues coordinate ATP: Arg116, Asp159, Arg162, Arg165, and Arg168. CTP is bound by residues Arg116, Asp159, Arg162, Arg165, and Arg168.

This sequence belongs to the tRNA nucleotidyltransferase/poly(A) polymerase family. Bacterial CCA-adding enzyme type 3 subfamily. In terms of assembly, homodimer. Mg(2+) is required as a cofactor.

It carries out the reaction a tRNA precursor + 2 CTP + ATP = a tRNA with a 3' CCA end + 3 diphosphate. It catalyses the reaction a tRNA with a 3' CCA end + 2 CTP + ATP = a tRNA with a 3' CCACCA end + 3 diphosphate. Functionally, catalyzes the addition and repair of the essential 3'-terminal CCA sequence in tRNAs without using a nucleic acid template. Adds these three nucleotides in the order of C, C, and A to the tRNA nucleotide-73, using CTP and ATP as substrates and producing inorganic pyrophosphate. tRNA 3'-terminal CCA addition is required both for tRNA processing and repair. Also involved in tRNA surveillance by mediating tandem CCA addition to generate a CCACCA at the 3' terminus of unstable tRNAs. While stable tRNAs receive only 3'-terminal CCA, unstable tRNAs are marked with CCACCA and rapidly degraded. This chain is CCA-adding enzyme, found in Streptococcus pyogenes serotype M3 (strain ATCC BAA-595 / MGAS315).